We begin with the raw amino-acid sequence, 447 residues long: C4-dicarboxylate transport protein (447 aa).

A run of 9 helical transmembrane segments spans residues 13–33 (SLYF…HYWP), 49–69 (LIKM…IAGM), 81–101 (LALL…LLIV), 149–169 (AFAK…GFAL), 189–209 (VLFA…FGAM), 227–247 (LMGT…GLIA), 302–322 (GYSF…VFIA), 336–356 (TLLA…GSGF), and 357–377 (IVLA…LALI). Residues 422-447 (ETEAEANEPEAVLDEIDQHMPVPAAR) are disordered. A compositionally biased stretch (acidic residues) spans 425-436 (AEANEPEAVLDE).

The protein belongs to the dicarboxylate/amino acid:cation symporter (DAACS) (TC 2.A.23) family.

The protein localises to the cell inner membrane. In terms of biological role, responsible for the transport of dicarboxylates such as succinate, fumarate, and malate from the periplasm across the membrane. This is C4-dicarboxylate transport protein from Leptothrix cholodnii (strain ATCC 51168 / LMG 8142 / SP-6) (Leptothrix discophora (strain SP-6)).